Here is a 317-residue protein sequence, read N- to C-terminus: Melanocyte-stimulating hormone receptor (317 aa).

The Extracellular portion of the chain corresponds to 1 to 37 (MPVQGSLRSLVGAVNSTPTASPHLRPATNQTEPQCLE). Asparagine 29 is a glycosylation site (N-linked (GlcNAc...) asparagine). A helical transmembrane segment spans residues 38–63 (VSVPVGLFLCLGLVSLVENTLVVAVI). The Cytoplasmic portion of the chain corresponds to 64–72 (AKNRNLHSP). A helical transmembrane segment spans residues 73–93 (MYCFICCLALSDLLVSVSNVL). Residues 94–118 (KTAVLLLLEAGALAAQATVVQQLGN) are Extracellular-facing. Residues 119 to 140 (VINMLICSSMVSSLCFLGAIAM) traverse the membrane as a helical segment. Residues 141 to 163 (DRYISIFYALRYHSIVTLARARR) lie on the Cytoplasmic side of the membrane. A helical membrane pass occupies residues 164–183 (AIAAVWVASILSSILFFTYY). Residues 184-191 (DRTAALLC) lie on the Extracellular side of the membrane. The chain crosses the membrane as a helical span at residues 192–211 (LVVFFLAMLVLMAVLYVHML). Residues 212 to 240 (TQACQHAQGIARLHKRQHPVQQGWGLKGA) are Cytoplasmic-facing. A helical transmembrane segment spans residues 241–266 (ATLAVLLGVFFLCWGPLFLHLTLIAV). Residues 267 to 279 (CPQHPTCNCIVKN) are Extracellular-facing. A helical transmembrane segment spans residues 280-300 (FKLFLALIICNAIVDPLIYAF). At 301-317 (RSQELRKTLKEVLLFSW) the chain is on the cytoplasmic side.

This sequence belongs to the G-protein coupled receptor 1 family. Interacts with MGRN1, but does not undergo MGRN1-mediated ubiquitination; this interaction competes with GNAS-binding and thus inhibits agonist-induced cAMP production. Interacts with OPN3; the interaction results in a decrease in MC1R-mediated cAMP signaling and ultimately a decrease in melanin production in melanocytes.

It localises to the cell membrane. In terms of biological role, receptor for MSH (alpha, beta and gamma) and ACTH. The activity of this receptor is mediated by G proteins which activate adenylate cyclase. Mediates melanogenesis, the production of eumelanin (black/brown) and phaeomelanin (red/yellow), via regulation of cAMP signaling in melanocytes. The polypeptide is Melanocyte-stimulating hormone receptor (MC1R) (Varecia rubra (Red ruffed lemur)).